The primary structure comprises 259 residues: Phosphatidylglycerol--prolipoprotein diacylglyceryl transferase (259 aa).

4 helical membrane-spanning segments follow: residues 12-32, 41-61, 80-100, and 109-129; these read LAIH…VYLA, ISSD…IVGA, IIAI…GALV, and VLNP…AQAI. A 1,2-diacyl-sn-glycero-3-phospho-(1'-sn-glycerol) is bound at residue Arg-131. Transmembrane regions (helical) follow at residues 167 to 187, 194 to 214, and 226 to 246; these read IPTF…IMMW, LLDG…RLVI, and GIRI…IFVI.

This sequence belongs to the Lgt family.

It is found in the cell membrane. The catalysed reaction is L-cysteinyl-[prolipoprotein] + a 1,2-diacyl-sn-glycero-3-phospho-(1'-sn-glycerol) = an S-1,2-diacyl-sn-glyceryl-L-cysteinyl-[prolipoprotein] + sn-glycerol 1-phosphate + H(+). Its pathway is protein modification; lipoprotein biosynthesis (diacylglyceryl transfer). Catalyzes the transfer of the diacylglyceryl group from phosphatidylglycerol to the sulfhydryl group of the N-terminal cysteine of a prolipoprotein, the first step in the formation of mature lipoproteins. The protein is Phosphatidylglycerol--prolipoprotein diacylglyceryl transferase of Streptococcus pyogenes serotype M3 (strain ATCC BAA-595 / MGAS315).